A 428-amino-acid chain; its full sequence is Methyl-branched lipid omega-hydroxylase (428 aa).

Cysteine 379 contacts heme.

Belongs to the cytochrome P450 family. The cofactor is heme.

The catalysed reaction is a methyl-branched lipid + O2 + 2 reduced ferredoxin [iron-sulfur] cluster + 2 H(+) = an omega-hydroxy-methyl-branched lipid + H2O + 2 oxidized ferredoxin [iron-sulfur] cluster.. It carries out the reaction cholest-4-en-3-one + 6 reduced [2Fe-2S]-[ferredoxin] + 3 O2 + 5 H(+) = (25R)-3-oxocholest-4-en-26-oate + 6 oxidized [2Fe-2S]-[ferredoxin] + 4 H2O. The protein operates within lipid metabolism; branched-chain fatty acid metabolism. In terms of biological role, primarily hydroxylates the omega-carbon of a number of methyl-branched lipids, including (2E,6E)-farnesol, phytanate, geranylgeraniol, 15-methylpalmitate and (2E,6E)-farnesyl diphosphate. Also catalyzes the sequential oxidation of the terminal methyl of cholest-4-en-3-one into (25R)-26-hydroxycholest-4-en-3-one (alcohol), (25R)-26-oxocholest-4-en-3-one (aldehyde), to finally yield the carboxylic acid (25R)-3-oxocholest-4-en-26-oate. Also able to sequentially oxidize cholesterol itself, not only cholest-4-en-3-one. In Mycobacterium tuberculosis (strain CDC 1551 / Oshkosh), this protein is Methyl-branched lipid omega-hydroxylase (cyp124).